Here is a 115-residue protein sequence, read N- to C-terminus: Integration host factor subunit alpha (115 aa).

It belongs to the bacterial histone-like protein family. In terms of assembly, heterodimer of an alpha and a beta chain.

Functionally, this protein is one of the two subunits of integration host factor, a specific DNA-binding protein that functions in genetic recombination as well as in transcriptional and translational control. The polypeptide is Integration host factor subunit alpha (Burkholderia pseudomallei (strain K96243)).